A 122-amino-acid polypeptide reads, in one-letter code: Ribosome-binding factor A (122 aa).

Belongs to the RbfA family. Monomer. Binds 30S ribosomal subunits, but not 50S ribosomal subunits or 70S ribosomes.

It is found in the cytoplasm. Functionally, one of several proteins that assist in the late maturation steps of the functional core of the 30S ribosomal subunit. Associates with free 30S ribosomal subunits (but not with 30S subunits that are part of 70S ribosomes or polysomes). Required for efficient processing of 16S rRNA. May interact with the 5'-terminal helix region of 16S rRNA. In Pelobacter propionicus (strain DSM 2379 / NBRC 103807 / OttBd1), this protein is Ribosome-binding factor A.